A 374-amino-acid chain; its full sequence is Organelle RRM domain-containing protein 1, chloroplastic (374 aa).

A chloroplast-targeting transit peptide spans M1–S54. Residues K258 to Q271 show a composition bias toward basic and acidic residues. The disordered stretch occupies residues K258–V279. In terms of domain architecture, RRM spans K282 to T360.

As to quaternary structure, interacts with PCMP-H51/CRR28 and PCMP-H12/OTP82. Interacts with MORF8/RIP1, MORF2/RIP2 and VAR3/OZ1.

It is found in the plastid. It localises to the chloroplast. Its function is as follows. Involved in C-to-U editing of chloroplastic RNA. Functions as major chloroplastic editing factor. Controls 62 percent of the chloroplastic editing sites. Binds RNA close to ORRM1-dependent editing sites in vitro. Binds the editing recognition trans-factors PCMP-H51/CRR28 and PCMP-H12/OTP82. The chain is Organelle RRM domain-containing protein 1, chloroplastic from Arabidopsis thaliana (Mouse-ear cress).